A 438-amino-acid chain; its full sequence is sn-glycerol-3-phosphate-binding periplasmic protein UgpB (438 aa).

Residues 1 to 23 (MKPLHYTASALALGLALMGNAQA) form the signal peptide. Sn-glycerol 3-phosphate is bound by residues tyrosine 65, glutamate 89, serine 144, serine 270, glycine 307, tyrosine 346, and arginine 397.

The protein belongs to the bacterial solute-binding protein 1 family. As to quaternary structure, the complex is composed of two ATP-binding proteins (UgpC), two transmembrane proteins (UgpA and UgpE) and a solute-binding protein (UgpB).

It localises to the periplasm. In terms of biological role, part of the ABC transporter complex UgpBAEC involved in sn-glycerol-3-phosphate (G3P) import. Binds G3P. This is sn-glycerol-3-phosphate-binding periplasmic protein UgpB (ugpB) from Shigella dysenteriae serotype 1 (strain Sd197).